Reading from the N-terminus, the 143-residue chain is Ribonuclease HI (143 aa).

In terms of domain architecture, RNase H type-1 spans 1–136 (MQEIEIFCDG…CDSLAKLEAQ (136 aa)). Residues Asp9, Glu47, Asp69, and Asp128 each contribute to the Mg(2+) site.

The protein belongs to the RNase H family. In terms of assembly, monomer. Requires Mg(2+) as cofactor.

It localises to the cytoplasm. It carries out the reaction Endonucleolytic cleavage to 5'-phosphomonoester.. Functionally, endonuclease that specifically degrades the RNA of RNA-DNA hybrids. The polypeptide is Ribonuclease HI (rnhA) (Helicobacter pylori (strain ATCC 700392 / 26695) (Campylobacter pylori)).